Reading from the N-terminus, the 208-residue chain is Protein disulfide-isomerase A3 (208 aa).

The 44-residue stretch at 1 to 44 folds into the Thioredoxin 1 domain; the sequence is RLAPEYEAAATRYGVSGYPTLKDGEEAGAYDGPRTADGIVSHLK. K44 is subject to N6-succinyllysine. N6-acetyllysine is present on K49. Position 133 is a phosphothreonine (T133). In terms of domain architecture, Thioredoxin 2 spans 151-208; it reads SRFLQDYFDGNLKRYLKSEPIPETNDGPVKMDATANDVPSPYEVKGFPTIYFSPANKK. N6-acetyllysine is present on K163.

The protein belongs to the protein disulfide isomerase family. Part of the major histocompatibility complex class I (MHC I) peptide loading complex composed of TAP1, TAP2, B2M, MHC heavy chain, TAPBP, PDIA3, and CALR. Interacts with ERP27 and CANX. Interacts with SERPINA2 and SERPINA1. Interacts with ATP2A2. Within the major histocompatibility complex class I (MHC I) peptide loading complex forms reversible disulfide-linked heterodimers with TAPBP as part of its protein folding chaperone activity. This is essential to assist the dynamic assembly of the MHC I complex with high affinity antigens in the endoplasmic reticulum. In terms of processing, phosphorylated. In the caput epididymal spermatozoa, detected in the mid-peice and at low levels in the principal piece. In the cauda epididymal spermatozoa, detected at very low levels in the principal piece and not in the mid-piece (at protein level).

It is found in the endoplasmic reticulum. The protein localises to the endoplasmic reticulum lumen. The protein resides in the melanosome. It catalyses the reaction Catalyzes the rearrangement of -S-S- bonds in proteins.. Its function is as follows. Protein disulfide isomerase that catalyzes the formation, isomerization, and reduction or oxidation of disulfide bonds in client proteins and functions as a protein folding chaperone. Core component of the major histocompatibility complex class I (MHC I) peptide loading complex where it functions as an essential folding chaperone for TAPBP. Through TAPBP, assists the dynamic assembly of the MHC I complex with high affinity antigens in the endoplasmic reticulum. Therefore, plays a crucial role in the presentation of antigens to cytotoxic T cells in adaptive immunity. The sequence is that of Protein disulfide-isomerase A3 from Mesocricetus auratus (Golden hamster).